The sequence spans 199 residues: Chromophore lyase CpcT/CpeT (199 aa).

The protein belongs to the CpcT/CpeT biliprotein lyase family.

Covalently attaches a chromophore to Cys residue(s) of phycobiliproteins. This chain is Chromophore lyase CpcT/CpeT, found in Prochlorococcus marinus (strain NATL1A).